The sequence spans 252 residues: Imidazole glycerol phosphate synthase subunit HisF (252 aa).

Active-site residues include Asp11 and Asp130.

Belongs to the HisA/HisF family. Heterodimer of HisH and HisF.

It localises to the cytoplasm. It catalyses the reaction 5-[(5-phospho-1-deoxy-D-ribulos-1-ylimino)methylamino]-1-(5-phospho-beta-D-ribosyl)imidazole-4-carboxamide + L-glutamine = D-erythro-1-(imidazol-4-yl)glycerol 3-phosphate + 5-amino-1-(5-phospho-beta-D-ribosyl)imidazole-4-carboxamide + L-glutamate + H(+). It functions in the pathway amino-acid biosynthesis; L-histidine biosynthesis; L-histidine from 5-phospho-alpha-D-ribose 1-diphosphate: step 5/9. In terms of biological role, IGPS catalyzes the conversion of PRFAR and glutamine to IGP, AICAR and glutamate. The HisF subunit catalyzes the cyclization activity that produces IGP and AICAR from PRFAR using the ammonia provided by the HisH subunit. This chain is Imidazole glycerol phosphate synthase subunit HisF, found in Bacillus mycoides (strain KBAB4) (Bacillus weihenstephanensis).